A 506-amino-acid polypeptide reads, in one-letter code: Maturase K (506 aa).

It belongs to the intron maturase 2 family. MatK subfamily.

It localises to the plastid. The protein resides in the chloroplast. Usually encoded in the trnK tRNA gene intron. Probably assists in splicing its own and other chloroplast group II introns. This chain is Maturase K, found in Manihot esculenta (Cassava).